Here is a 188-residue protein sequence, read N- to C-terminus: Molybdopterin synthase catalytic subunit (188 aa).

Positions 1 to 10 (MSTSETSSYT) are enriched in polar residues. Positions 1–21 (MSTSETSSYTPDIPSEPVTKT) are disordered. Residues 123–124 (HR), K139, and 146–148 (KLE) contribute to the substrate site.

This sequence belongs to the MoaE family. MOCS2B subfamily. Heterotetramer; composed of 2 small (MOCS2A) and 2 large (MOCS2B) subunits.

The protein resides in the cytoplasm. The catalysed reaction is 2 [molybdopterin-synthase sulfur-carrier protein]-C-terminal-Gly-aminoethanethioate + cyclic pyranopterin phosphate + H2O = molybdopterin + 2 [molybdopterin-synthase sulfur-carrier protein]-C-terminal Gly-Gly + 2 H(+). It functions in the pathway cofactor biosynthesis; molybdopterin biosynthesis. In terms of biological role, catalytic subunit of the molybdopterin synthase complex, a complex that catalyzes the conversion of precursor Z into molybdopterin. Acts by mediating the incorporation of 2 sulfur atoms from thiocarboxylated MOCS2A into precursor Z to generate a dithiolene group. In Phaeosphaeria nodorum (strain SN15 / ATCC MYA-4574 / FGSC 10173) (Glume blotch fungus), this protein is Molybdopterin synthase catalytic subunit.